Reading from the N-terminus, the 2276-residue chain is Protein Ycf2 (2276 aa).

1621–1628 (GSIGTGRS) is a binding site for ATP.

The protein belongs to the Ycf2 family.

The protein localises to the plastid. It is found in the chloroplast stroma. In terms of biological role, probable ATPase of unknown function. Its presence in a non-photosynthetic plant (Epifagus virginiana) and experiments in tobacco indicate that it has an essential function which is probably not related to photosynthesis. The polypeptide is Protein Ycf2 (Guizotia abyssinica (Niger)).